The primary structure comprises 340 residues: NADH-quinone oxidoreductase subunit H (340 aa).

8 helical membrane passes run 4-24 (TIGILIWIIIKILVIVVPLLI), 78-98 (YLFVIAPLFALVPSLVGWAVI), 113-133 (VLYLFAMSSLGVYGVLIAGWA), 151-171 (VSYEIAMGFALVGVLLAAGSM), 184-204 (MLHWWFIPLLPLFLVFWISGI), 244-264 (SMILISTVLAILFMGGWLSPF), 273-293 (IFFIVPGFVWLLLKISFFLFV), and 316-336 (VLIPVTIVWLIVTALMVVAHV).

The protein belongs to the complex I subunit 1 family. As to quaternary structure, NDH-1 is composed of 14 different subunits. Subunits NuoA, H, J, K, L, M, N constitute the membrane sector of the complex.

It localises to the cell inner membrane. It catalyses the reaction a quinone + NADH + 5 H(+)(in) = a quinol + NAD(+) + 4 H(+)(out). In terms of biological role, NDH-1 shuttles electrons from NADH, via FMN and iron-sulfur (Fe-S) centers, to quinones in the respiratory chain. The immediate electron acceptor for the enzyme in this species is believed to be ubiquinone. Couples the redox reaction to proton translocation (for every two electrons transferred, four hydrogen ions are translocated across the cytoplasmic membrane), and thus conserves the redox energy in a proton gradient. This subunit may bind ubiquinone. This chain is NADH-quinone oxidoreductase subunit H, found in Legionella pneumophila subsp. pneumophila (strain Philadelphia 1 / ATCC 33152 / DSM 7513).